A 168-amino-acid polypeptide reads, in one-letter code: Photosystem I assembly protein Ycf3 (168 aa).

TPR repeat units lie at residues 35-68 (AFTY…EIDP), 72-105 (SYIL…NPFL), and 120-153 (GEQA…TPGN).

This sequence belongs to the Ycf3 family.

It is found in the plastid. Its subcellular location is the chloroplast thylakoid membrane. Functionally, essential for the assembly of the photosystem I (PSI) complex. May act as a chaperone-like factor to guide the assembly of the PSI subunits. The chain is Photosystem I assembly protein Ycf3 from Lemna minor (Common duckweed).